The following is a 390-amino-acid chain: Pre-mycofactocin synthase (390 aa).

One can recognise an FMN hydroxy acid dehydrogenase domain in the interval 1–383 (MADEWFETVA…RSDDILIPAD (383 aa)). Positions 108, 128, 156, and 254 each coordinate FMN. Histidine 278 acts as the Proton acceptor in catalysis. FMN-binding positions include 309-313 (DGGIR) and 332-333 (GR).

It belongs to the FMN-dependent alpha-hydroxy acid dehydrogenase family. The cofactor is FMN.

It catalyses the reaction 3-amino-5-[(4-hydroxyphenyl)methyl]-4,4-dimethyl-2-pyrrolidin-2-one + O2 + H2O = pre-mycofactocin + H2O2 + NH4(+). Functionally, involved in the biosynthesis of the enzyme cofactor mycofactocin (MFT). Catalyzes the oxidative deamination of AHDP (3-amino-5-[(4-hydroxyphenyl)methyl]-4,4-dimethyl-2-pyrrolidin-2-one), forming an alpha-keto amide moiety on the resulting molecule, which is called pre-mycofactocin (PMFT). This reaction occurs via a 5-[(4-hydroxyphenyl)methyl]-3-imino-4,4-dimethylpyrrolidin-2-one intermediate, which converts to PMFT. The alpha-keto amide moiety is the redox-active center for the redox activity of mycofactocin. This Mycobacterium ulcerans (strain Agy99) protein is Pre-mycofactocin synthase.